Here is a 1225-residue protein sequence, read N- to C-terminus: DNA-directed RNA polymerase subunit beta' (1225 aa).

Residues Cys60, Cys62, Cys75, and Cys78 each contribute to the Zn(2+) site. Asp450, Asp452, and Asp454 together coordinate Mg(2+). Residues Cys818, Cys892, Cys899, and Cys902 each contribute to the Zn(2+) site.

The protein belongs to the RNA polymerase beta' chain family. The RNAP catalytic core consists of 2 alpha, 1 beta, 1 beta' and 1 omega subunit. When a sigma factor is associated with the core the holoenzyme is formed, which can initiate transcription. Requires Mg(2+) as cofactor. The cofactor is Zn(2+).

The catalysed reaction is RNA(n) + a ribonucleoside 5'-triphosphate = RNA(n+1) + diphosphate. Its function is as follows. DNA-dependent RNA polymerase catalyzes the transcription of DNA into RNA using the four ribonucleoside triphosphates as substrates. In Streptococcus pneumoniae (strain ATCC BAA-255 / R6), this protein is DNA-directed RNA polymerase subunit beta'.